We begin with the raw amino-acid sequence, 396 residues long: Argininosuccinate synthase (396 aa).

9–17 (AYSGGLDTS) contacts ATP. L-citrulline is bound at residue Y85. Residue G115 participates in ATP binding. Residues T117, N121, and D122 each coordinate L-aspartate. Residue N121 coordinates L-citrulline. L-citrulline-binding residues include R125, S173, E258, and Y270.

The protein belongs to the argininosuccinate synthase family. Type 1 subfamily. As to quaternary structure, homotetramer.

The protein localises to the cytoplasm. The catalysed reaction is L-citrulline + L-aspartate + ATP = 2-(N(omega)-L-arginino)succinate + AMP + diphosphate + H(+). Its pathway is amino-acid biosynthesis; L-arginine biosynthesis; L-arginine from L-ornithine and carbamoyl phosphate: step 2/3. The sequence is that of Argininosuccinate synthase from Streptococcus agalactiae serotype III (strain NEM316).